Reading from the N-terminus, the 374-residue chain is Mitochondrial import inner membrane translocase subunit tim50 (374 aa).

The transit peptide at 1 to 48 directs the protein to the mitochondrion; sequence MILNKVAKCYGKQIGFFGNKTTQFIKPNQTIFLIGGTKRLFTTQQQQS. The disordered stretch occupies residues 42-97; the sequence is TTQQQQSPKKEEPKSEQQKKVEDKTEEKEKEKDEEENENEKEKENEDGEGQKKKSK. Basic and acidic residues-rich tracts occupy residues 49–72 and 81–93; these read PKKEEPKSEQQKKVEDKTEEKEKE and EKEKENEDGEGQK. A helical transmembrane segment spans residues 103-125; it reads IVTSVTSTFFAGVLVASTFGYLT. The region spanning 191-332 is the FCP1 homology domain; sequence PGGKKYTLVI…IELLPVLESF (142 aa).

The protein belongs to the TIM50 family. In terms of assembly, component of the mitochondrial import inner membrane translocase complex.

Its subcellular location is the mitochondrion inner membrane. Its function is as follows. Component of the mitochondrial import inner membrane translocase that mediates the translocation of transit peptide-containing proteins across the mitochondrial inner membrane. The protein is Mitochondrial import inner membrane translocase subunit tim50 (timm50) of Dictyostelium discoideum (Social amoeba).